We begin with the raw amino-acid sequence, 261 residues long: tRNA pseudouridine synthase A (261 aa).

Aspartate 51 functions as the Nucleophile in the catalytic mechanism. Tyrosine 109 serves as a coordination point for substrate.

It belongs to the tRNA pseudouridine synthase TruA family. As to quaternary structure, homodimer.

The enzyme catalyses uridine(38/39/40) in tRNA = pseudouridine(38/39/40) in tRNA. Functionally, formation of pseudouridine at positions 38, 39 and 40 in the anticodon stem and loop of transfer RNAs. The polypeptide is tRNA pseudouridine synthase A (Shewanella frigidimarina (strain NCIMB 400)).